The sequence spans 206 residues: Large ribosomal subunit protein uL13 (206 aa).

It belongs to the universal ribosomal protein uL13 family.

The polypeptide is Large ribosomal subunit protein uL13 (RPL13A) (Picea mariana (Black spruce)).